The chain runs to 484 residues: Pre-glycoprotein polyprotein GP complex (484 aa).

G2 carries the N-myristoyl glycine; by host lipid modification. Residues 2-17 lie on the Extracellular side of the membrane; sequence GQLVSFFQEIPNIIQE. Residues 18-33 form a helical membrane-spanning segment; that stretch reads AINIALIAVSLIAILK. The Cytoplasmic segment spans residues 34–58; sequence GLVNLWKSGLFQLLVFLILAGRSCS. C57 contacts Zn(2+). Residues 59 to 423 lie on the Extracellular side of the membrane; that stretch reads FKIGRSTELQ…QGKTPITLVD (365 aa). 4 disulfides stabilise this stretch: C85–C225, C270–C283, C292–C301, and C355–C376. 4 N-linked (GlcNAc...) asparagine; by host glycosylation sites follow: N88, N125, N178, and N218. N356, N364, N381, and N386 each carry an N-linked (GlcNAc...) asparagine; by host glycan. A helical membrane pass occupies residues 424–444; it reads ICFWSTLFFTTTLFLHLVGFP. Over 445 to 484 the chain is Cytoplasmic; it reads THRHIQGEPCPLPHKLNSNGGCRCGRYPELKKPTTWHRKH. Zn(2+) is bound by residues H446, H448, C454, H458, C466, C468, and H484.

It belongs to the arenaviridae GPC protein family. Interacts with glycoprotein G2. Part of the GP complex (GP-C) together with glycoprotein G1 and glycoprotein G2. The GP-complex interacts with protein Z, which interacts with ribonucleocapsid; these interactions may induce virion budding. In terms of assembly, homotrimer; disulfide-linked. In pre-fusion state, G1 homotrimers bind G2 homotrimers via ionic interactions. Part of the GP complex (GP-C) together with glycoprotein G2 and the stable signal peptide. The GP-complex interacts with protein Z, which interacts with ribonucleocapsid; these interactions may induce virion budding. As to quaternary structure, homotrimer. Interacts with the stable signal peptide. In pre-fusion state, G2 homotrimers bind G1 homotrimers via ionic interactions. Part of the GP complex (GP-C) together with glycoprotein G1 and the stable signal peptide. Acidification in the endosome triggers rearrangements, which ultimately leads to a 6 helix bundle formed by the two heptad repeat domains (HR1 and HR2) in post-fusion state. The GP-complex interacts with protein Z, which interacts with ribonucleocapsid; these interactions may induce virion budding. Specific enzymatic cleavages in vivo yield mature proteins. GP-C polyprotein is cleaved in the endoplasmic reticulum by the host protease MBTPS1. Only cleaved glycoprotein is incorporated into virions. In terms of processing, the SSP remains stably associated with the GP complex following cleavage by signal peptidase and plays crucial roles in the trafficking of GP through the secretory pathway. Post-translationally, myristoylation is necessary for GP2-mediated fusion activity.

The protein localises to the virion membrane. It localises to the host endoplasmic reticulum membrane. It is found in the host Golgi apparatus membrane. The protein resides in the host cell membrane. Functionally, functions as a cleaved signal peptide that is retained as the third component of the GP complex (GP-C). Helps to stabilize the spike complex in its native conformation. The SSP is required for efficient glycoprotein expression, post-translational maturation cleavage of G1 and G2, glycoprotein transport to the cell surface plasma membrane, formation of infectious virus particles, and acid pH-dependent glycoprotein-mediated cell fusion. Glycoprotein G1: Forms the virion spikes together with glycoprotein G2. The glycoprotein spike trimers are connected to the underlying matrix. Interacts with the host receptor leading to virus endocytosis. Its function is as follows. Forms the virion spikes together with glycoprotein G1. The glycoprotein spike trimers are connected to the underlying matrix. Class I viral fusion protein that directs fusion of viral and host endosomal membranes, leading to delivery of the nucleocapsid into the cytoplasm. Membrane fusion is mediated by irreversible conformational changes induced by acidification. In Chapare mammarenavirus (isolate Human/Bolivia/810419/2003), this protein is Pre-glycoprotein polyprotein GP complex.